Reading from the N-terminus, the 356-residue chain is Guanine nucleotide-binding protein alpha-2 subunit (356 aa).

The N-myristoyl glycine moiety is linked to residue glycine 2. Cysteine 4 carries the S-palmitoyl cysteine lipid modification. Residues 32 to 356 (RTVKLLLLGA…QSNLHKSGLY (325 aa)) enclose the G-alpha domain. The G1 motif stretch occupies residues 35–48 (KLLLLGAGECGKST). GTP-binding residues include glutamate 43, glycine 45, lysine 46, serine 47, threonine 48, aspartate 153, leucine 178, threonine 184, glycine 206, asparagine 272, lysine 273, aspartate 275, and alanine 328. Residue serine 47 participates in Mg(2+) binding. The interval 176–184 (DTLLLRTKT) is G2 motif. Threonine 184 is a Mg(2+) binding site. The interval 199 to 208 (FRVFDVGGQR) is G3 motif. The segment at 268–275 (ILFLNKKD) is G4 motif. The G5 motif stretch occupies residues 326 to 331 (TCATDT).

This sequence belongs to the G-alpha family. G(q) subfamily. G proteins are composed of 3 units; alpha, beta and gamma. The alpha chain contains the guanine nucleotide binding site. It depends on Mg(2+) as a cofactor.

In terms of biological role, guanine nucleotide-binding proteins (G proteins) are involved as modulators or transducers in various transmembrane signaling systems. Involved in behavioral responses to P.aeruginosa by controlling the expression of daf-7, a member of the TGF-beta family, in ASJ sensory neurons. The polypeptide is Guanine nucleotide-binding protein alpha-2 subunit (gpa-2) (Caenorhabditis elegans).